The sequence spans 633 residues: uncharacterized protein (633 aa).

The disordered stretch occupies residues 1-188; sequence MNNRGGFSHP…GQSSFYNSSY (188 aa). Low complexity-rich tracts occupy residues 32–80 and 104–148; these read GQPQ…GGNN and NNGN…TNSR. Residues 152–178 show a composition bias toward gly residues; that stretch reads RGGSSRGGSSRGGNSGSSRGGSRGGYR. A coiled-coil region spans residues 580 to 607; that stretch reads KSKNWTVDQASDELKKLSKNLRLLVSKH. A disordered region spans residues 611 to 633; that stretch reads TKFQPPSADHTTQFEQDDEEEEN.

This is an uncharacterized protein from Dictyostelium discoideum (Social amoeba).